Here is a 430-residue protein sequence, read N- to C-terminus: Enolase (430 aa).

Glutamine 163 is a (2R)-2-phosphoglycerate binding site. Glutamate 205 (proton donor) is an active-site residue. Mg(2+) is bound by residues aspartate 242, glutamate 287, and aspartate 314. Positions 339, 368, 369, and 390 each coordinate (2R)-2-phosphoglycerate. Residue lysine 339 is the Proton acceptor of the active site.

Belongs to the enolase family. The cofactor is Mg(2+).

Its subcellular location is the cytoplasm. It is found in the secreted. It localises to the cell surface. The catalysed reaction is (2R)-2-phosphoglycerate = phosphoenolpyruvate + H2O. Its pathway is carbohydrate degradation; glycolysis; pyruvate from D-glyceraldehyde 3-phosphate: step 4/5. Its function is as follows. Catalyzes the reversible conversion of 2-phosphoglycerate (2-PG) into phosphoenolpyruvate (PEP). It is essential for the degradation of carbohydrates via glycolysis. This Bacillus pumilus (strain SAFR-032) protein is Enolase.